The sequence spans 248 residues: Probable transcriptional regulatory protein BOV_1660 (248 aa).

The protein belongs to the TACO1 family.

Its subcellular location is the cytoplasm. This Brucella ovis (strain ATCC 25840 / 63/290 / NCTC 10512) protein is Probable transcriptional regulatory protein BOV_1660.